A 297-amino-acid chain; its full sequence is tRNA pseudouridine synthase B (297 aa).

The active-site Nucleophile is aspartate 39.

The protein belongs to the pseudouridine synthase TruB family. Type 1 subfamily.

The catalysed reaction is uridine(55) in tRNA = pseudouridine(55) in tRNA. Functionally, responsible for synthesis of pseudouridine from uracil-55 in the psi GC loop of transfer RNAs. The polypeptide is tRNA pseudouridine synthase B (Lactobacillus gasseri (strain ATCC 33323 / DSM 20243 / BCRC 14619 / CIP 102991 / JCM 1131 / KCTC 3163 / NCIMB 11718 / NCTC 13722 / AM63)).